A 469-amino-acid chain; its full sequence is Glutamine synthetase (469 aa).

The GS beta-grasp domain maps to 16–100; that stretch reads EGVQYVDLRF…MICDIYDPVT (85 aa). The 362-residue stretch at 108 to 469 folds into the GS catalytic domain; the sequence is TRYIAQKAEQ…PKEFELYWDI (362 aa). The Mg(2+) site is built by glutamate 133 and glutamate 135. Residue glutamate 207 participates in ATP binding. Glutamate 212 and glutamate 220 together coordinate Mg(2+). L-glutamate contacts are provided by residues 264 to 265 and glycine 265; that span reads NG. Histidine 269 contributes to the Mg(2+) binding site. ATP contacts are provided by residues 271 to 273 and serine 273; that span reads HFS. 3 residues coordinate L-glutamate: arginine 321, glutamate 327, and arginine 339. ATP-binding residues include arginine 339, arginine 344, and lysine 353. Glutamate 358 contributes to the Mg(2+) binding site. Arginine 360 contacts L-glutamate. At tyrosine 398 the chain carries O-AMP-tyrosine.

The protein belongs to the glutamine synthetase family. Oligomer of 12 subunits arranged in the form of two hexagons. Requires Mg(2+) as cofactor.

It localises to the cytoplasm. It carries out the reaction L-glutamate + NH4(+) + ATP = L-glutamine + ADP + phosphate + H(+). With respect to regulation, the activity of this enzyme could be controlled by adenylation under conditions of abundant glutamine. Catalyzes the ATP-dependent biosynthesis of glutamine from glutamate and ammonia. This chain is Glutamine synthetase, found in Aquifex aeolicus (strain VF5).